The chain runs to 887 residues: Alanine--tRNA ligase (887 aa).

The Zn(2+) site is built by H579, H583, C681, and H685.

The protein belongs to the class-II aminoacyl-tRNA synthetase family. Zn(2+) serves as cofactor.

It localises to the cytoplasm. The catalysed reaction is tRNA(Ala) + L-alanine + ATP = L-alanyl-tRNA(Ala) + AMP + diphosphate. Catalyzes the attachment of alanine to tRNA(Ala) in a two-step reaction: alanine is first activated by ATP to form Ala-AMP and then transferred to the acceptor end of tRNA(Ala). Also edits incorrectly charged Ser-tRNA(Ala) and Gly-tRNA(Ala) via its editing domain. This chain is Alanine--tRNA ligase, found in Flavobacterium psychrophilum (strain ATCC 49511 / DSM 21280 / CIP 103535 / JIP02/86).